We begin with the raw amino-acid sequence, 1102 residues long: PAN2-PAN3 deadenylation complex catalytic subunit PAN2 (1102 aa).

WD repeat units lie at residues 20-59 (DYPRPATALAFDTIAELLWAGNDRGRVVSFYGRDLQRYTA), 104-144 (DEME…IVKQ), and 269-308 (NVMSFINLFEIAPSGEALAMADTECNIHLWGSPSKIHFTD). A linker region spans residues 308 to 445 (DMAIPIEMPK…STDELESLKP (138 aa)). The disordered stretch occupies residues 423–442 (AVPDPKVEQVPESSTDELES). The USP domain maps to 446 to 833 (EAPPIYRNLE…LPAVLLFQVK (388 aa)). Positions 881–1054 (VGLDTEFVSL…EDARTALKLY (174 aa)) constitute an Exonuclease domain. Residues Asp884, Glu886, Asp993, and Asp1046 each contribute to the a divalent metal cation site.

It belongs to the peptidase C19 family. PAN2 subfamily. In terms of assembly, forms a heterotrimer with an asymmetric homodimer of the regulatory subunit PAN3 to form the poly(A)-nuclease (PAN) deadenylation complex. The cofactor is a divalent metal cation.

The protein localises to the cytoplasm. It catalyses the reaction Exonucleolytic cleavage of poly(A) to 5'-AMP.. With respect to regulation, positively regulated by the regulatory subunit PAN3. In terms of biological role, catalytic subunit of the poly(A)-nuclease (PAN) deadenylation complex, one of two cytoplasmic mRNA deadenylases involved in mRNA turnover. PAN specifically shortens poly(A) tails of RNA and the activity is stimulated by poly(A)-binding protein PAB1. PAN deadenylation is followed by rapid degradation of the shortened mRNA tails by the CCR4-NOT complex. Deadenylated mRNAs are then degraded by two alternative mechanisms, namely exosome-mediated 3'-5' exonucleolytic degradation, or deadenylation-dependent mRNA decaping and subsequent 5'-3' exonucleolytic degradation by XRN1. May also be involved in post-transcriptional maturation of mRNA poly(A) tails. The chain is PAN2-PAN3 deadenylation complex catalytic subunit PAN2 from Chaetomium globosum (strain ATCC 6205 / CBS 148.51 / DSM 1962 / NBRC 6347 / NRRL 1970) (Soil fungus).